The primary structure comprises 338 residues: Egl nine homolog 1 (338 aa).

Low complexity predominate over residues 1 to 11 (PRAQPAPAQPR). The interval 1–99 (PRAQPAPAQP…PSGGLRPNGQ (99 aa)) is disordered. S52 bears the Phosphoserine mark. S-nitrosocysteine is present on residues C116 and C123. A beta(2)beta(3) 'finger-like' loop region spans residues 156-166 (VSQKSDSSKDI). Residues 209–307 (GRTKAMVACY…RYAITVWYFD (99 aa)) form the Fe2OG dioxygenase domain. C217 carries the S-nitrosocysteine modification. 2 residues coordinate Fe cation: H228 and D230. S-nitrosocysteine occurs at positions 238 and 241. H289 provides a ligand contact to Fe cation. R298 contributes to the 2-oxoglutarate binding site.

Monomer. Interacts with ING4; the interaction inhibits the hydroxylation of HIF alpha proteins. Interacts with PTGES3 (via PXLE motif); thereby recruiting EGLN1 to the HSP90 pathway to facilitate HIF alpha proteins hydroxylation. Interacts with LIMD1. Found in a complex composed of LIMD1, VHL, EGLN1/PHD2, ELOB and CUL2. Interacts with EPAS1. Interacts with CBFA2T3 and HIF1A. The cofactor is Fe(2+). It depends on L-ascorbate as a cofactor. S-nitrosylation inhibits the enzyme activity up to 60% under aerobic conditions. Chelation of Fe(2+) has no effect on the S-nitrosylation. It is uncertain whether nitrosylation occurs on Cys-238 or Cys-241. As to expression, expressed in heart, liver, kidney, brain, liver and testis. Highest levels in heart, lowest in liver.

It localises to the cytoplasm. The protein localises to the nucleus. The catalysed reaction is L-prolyl-[hypoxia-inducible factor alpha subunit] + 2-oxoglutarate + O2 = trans-4-hydroxy-L-prolyl-[hypoxia-inducible factor alpha subunit] + succinate + CO2. Increased activation in hypoxia. Hydroxylation of the C-terminal ODD domain (CODD) proline of HIF1A is activated by cyclosporin A (CsA). Its function is as follows. Cellular oxygen sensor that catalyzes, under normoxic conditions, the post-translational formation of 4-hydroxyproline in hypoxia-inducible factor (HIF) alpha proteins. Hydroxylates a specific proline found in each of the oxygen-dependent degradation (ODD) domains (N-terminal, NODD, and C-terminal, CODD) of HIF1A. Also hydroxylates HIF2A. Has a preference for the CODD site for both HIF1A and HIF1B. Hydroxylated HIFs are then targeted for proteasomal degradation via the von Hippel-Lindau ubiquitination complex. Under hypoxic conditions, the hydroxylation reaction is attenuated allowing HIFs to escape degradation resulting in their translocation to the nucleus, heterodimerization with HIF1B, and increased expression of hypoxy-inducible genes. EGLN1 is the most important isozyme under normoxia and, through regulating the stability of HIF1, involved in various hypoxia-influenced processes such as angiogenesis in retinal and cardiac functionality. Target proteins are preferentially recognized via a LXXLAP motif. The chain is Egl nine homolog 1 (Egln1) from Rattus norvegicus (Rat).